The sequence spans 423 residues: Glucose-1-phosphate adenylyltransferase (423 aa).

Alpha-D-glucose 1-phosphate contacts are provided by residues Y98, G163, 178-179 (EK), and S189.

This sequence belongs to the bacterial/plant glucose-1-phosphate adenylyltransferase family. In terms of assembly, homotetramer.

The catalysed reaction is alpha-D-glucose 1-phosphate + ATP + H(+) = ADP-alpha-D-glucose + diphosphate. Its pathway is glycan biosynthesis; glycogen biosynthesis. Involved in the biosynthesis of ADP-glucose, a building block required for the elongation reactions to produce glycogen. Catalyzes the reaction between ATP and alpha-D-glucose 1-phosphate (G1P) to produce pyrophosphate and ADP-Glc. This is Glucose-1-phosphate adenylyltransferase from Thermotoga sp. (strain RQ2).